The following is a 561-amino-acid chain: Interleukin-1 receptor-like 2 (561 aa).

The signal sequence occupies residues 1-21 (MGMPPLLFCWVSFVLPLFVAA). Ig-like C2-type domains follow at residues 22–113 (GNCT…INLT), 128–215 (SINS…VRNY), and 225–321 (SGGR…TCHA). The Extracellular portion of the chain corresponds to 22 to 338 (GNCTDVYMHH…ILKRPAPDFR (317 aa)). N-linked (GlcNAc...) asparagine glycosylation is found at N23, N43, N55, N111, and N130. C44 and C97 are disulfide-bonded. A disulfide bridge connects residues C149 and C199. N231, N237, N253, N269, N290, and N302 each carry an N-linked (GlcNAc...) asparagine glycan. C252 and C319 form a disulfide bridge. The chain crosses the membrane as a helical span at residues 339 to 358 (AYLIGGLMAFLLLAVSILYI). Over 359-561 (YNTFKVDIVL…LLGHTPRIPG (203 aa)) the chain is Cytoplasmic. In terms of domain architecture, TIR spans 384–539 (KLYDAYVLYP…KFWKKVRYHM (156 aa)). Residue E470 is part of the active site.

The protein belongs to the interleukin-1 receptor family. As to quaternary structure, interacts with IL1RAP; the association is enhanced by IL36B indicative for an functional signaling complex and inhibited by IL36RN. In terms of tissue distribution, predominant expression in the lung and epididymis, with lower expression in cerebral cortex and testis. Expression in the brain is non-neuronal and associated with the cerebral vasculature. Not detected in any cell line tested.

Its subcellular location is the membrane. The catalysed reaction is NAD(+) + H2O = ADP-D-ribose + nicotinamide + H(+). Functionally, receptor for interleukin-36 (IL36A, IL36B and IL36G). After binding to interleukin-36 associates with the coreceptor IL1RAP to form the interleukin-36 receptor complex which mediates interleukin-36-dependent activation of NF-kappa-B, MAPK and other pathways. The IL-36 signaling system is thought to be present in epithelial barriers and to take part in local inflammatory response; it is similar to the IL-1 system. Seems to be involved in skin inflammatory response by induction of the IL-23/IL-17/IL-22 pathway. Receptor for the interleukin IL36G. Binding to the agonist leads to the activation of NF-kappa-B. The polypeptide is Interleukin-1 receptor-like 2 (Il1rl2) (Rattus norvegicus (Rat)).